Consider the following 201-residue polypeptide: 3-isopropylmalate dehydratase small subunit (201 aa).

The protein belongs to the LeuD family. LeuD type 1 subfamily. In terms of assembly, heterodimer of LeuC and LeuD.

It catalyses the reaction (2R,3S)-3-isopropylmalate = (2S)-2-isopropylmalate. The protein operates within amino-acid biosynthesis; L-leucine biosynthesis; L-leucine from 3-methyl-2-oxobutanoate: step 2/4. Catalyzes the isomerization between 2-isopropylmalate and 3-isopropylmalate, via the formation of 2-isopropylmaleate. The chain is 3-isopropylmalate dehydratase small subunit from Shewanella piezotolerans (strain WP3 / JCM 13877).